Reading from the N-terminus, the 156-residue chain is MPRWGYSVKLRDESEVAKAVLRNVPVHPKIMAEVARAISGMRVDEARRYLRAVIEKREAVPFRRAHGKQAHRRGLADKWGWPVGRYPVKAARYMLKLLDNVEANAANKNLDVERLKIIHVAAHKGITLKRWMPRAWGRATPRNRVHSHIEIMVREV.

Belongs to the universal ribosomal protein uL22 family. As to quaternary structure, part of the 50S ribosomal subunit.

Its function is as follows. This protein binds specifically to 23S rRNA. It makes multiple contacts with different domains of the 23S rRNA in the assembled 50S subunit and ribosome. In terms of biological role, the globular domain of the protein is located near the polypeptide exit tunnel on the outside of the subunit, while an extended beta-hairpin is found that lines the wall of the exit tunnel in the center of the 70S ribosome. The protein is Large ribosomal subunit protein uL22 of Aeropyrum pernix (strain ATCC 700893 / DSM 11879 / JCM 9820 / NBRC 100138 / K1).